A 251-amino-acid chain; its full sequence is Pyrroloquinoline-quinone synthase (251 aa).

It belongs to the PqqC family.

The enzyme catalyses 6-(2-amino-2-carboxyethyl)-7,8-dioxo-1,2,3,4,7,8-hexahydroquinoline-2,4-dicarboxylate + 3 O2 = pyrroloquinoline quinone + 2 H2O2 + 2 H2O + H(+). The protein operates within cofactor biosynthesis; pyrroloquinoline quinone biosynthesis. Its function is as follows. Ring cyclization and eight-electron oxidation of 3a-(2-amino-2-carboxyethyl)-4,5-dioxo-4,5,6,7,8,9-hexahydroquinoline-7,9-dicarboxylic-acid to PQQ. The chain is Pyrroloquinoline-quinone synthase from Pseudomonas syringae pv. tomato (strain ATCC BAA-871 / DC3000).